The following is a 157-amino-acid chain: uncharacterized protein (157 aa).

Disordered stretches follow at residues 76 to 105 (AINQ…GPRG) and 132 to 157 (VRAP…RMRG). A compositionally biased stretch (low complexity) spans 135 to 148 (PSTKPSKTSSSNNP).

This sequence to M.pneumoniae MPN_091 and MPN_413.

This is an uncharacterized protein from Mycoplasma pneumoniae (strain ATCC 29342 / M129 / Subtype 1) (Mycoplasmoides pneumoniae).